Consider the following 118-residue polypeptide: Large ribosomal subunit protein bL20 (118 aa).

It belongs to the bacterial ribosomal protein bL20 family.

Binds directly to 23S ribosomal RNA and is necessary for the in vitro assembly process of the 50S ribosomal subunit. It is not involved in the protein synthesizing functions of that subunit. The sequence is that of Large ribosomal subunit protein bL20 from Sulfurimonas denitrificans (strain ATCC 33889 / DSM 1251) (Thiomicrospira denitrificans (strain ATCC 33889 / DSM 1251)).